The following is a 234-amino-acid chain: Endonuclease V (234 aa).

Asp-36 and Asp-104 together coordinate Mg(2+).

Belongs to the endonuclease V family. It depends on Mg(2+) as a cofactor.

It localises to the cytoplasm. The enzyme catalyses Endonucleolytic cleavage at apurinic or apyrimidinic sites to products with a 5'-phosphate.. Its function is as follows. DNA repair enzyme involved in the repair of deaminated bases. Selectively cleaves double-stranded DNA at the second phosphodiester bond 3' to a deoxyinosine leaving behind the intact lesion on the nicked DNA. This is Endonuclease V from Yersinia enterocolitica serotype O:8 / biotype 1B (strain NCTC 13174 / 8081).